The primary structure comprises 530 residues: Probable phosphoacetylglucosamine mutase (530 aa).

Catalysis depends on S62, which acts as the Phosphoserine intermediate. Positions 62, 278, 280, and 282 each coordinate Mg(2+). Residues 369-371 (EPN), 481-485 (RPSGT), and R490 contribute to the substrate site.

The protein belongs to the phosphohexose mutase family. Mg(2+) is required as a cofactor.

It carries out the reaction N-acetyl-alpha-D-glucosamine 1-phosphate = N-acetyl-D-glucosamine 6-phosphate. The protein operates within nucleotide-sugar biosynthesis; UDP-N-acetyl-alpha-D-glucosamine biosynthesis; N-acetyl-alpha-D-glucosamine 1-phosphate from alpha-D-glucosamine 6-phosphate (route I): step 2/2. Its function is as follows. Catalyzes the conversion of GlcNAc-6-P into GlcNAc-1-P during the synthesis of uridine diphosphate/UDP-GlcNAc, which is a biosynthetic precursor of chitin and also supplies the amino sugars for N-linked oligosaccharides of glycoproteins. This is Probable phosphoacetylglucosamine mutase from Encephalitozoon cuniculi (strain GB-M1) (Microsporidian parasite).